Consider the following 555-residue polypeptide: Carboxysome assembly protein CcmM (555 aa).

The segment at 1 to 209 is has carbonic anhydrase (CA) activity; that stretch reads MAVRSTAAPP…CIAPLRNDQV (209 aa). Residue Glu-56 is the Proton donor/acceptor of the active site. Residues His-75, His-102, and His-107 each contribute to the Zn(2+) site. Cys-194 and Cys-200 are disulfide-bonded. Positions 223–315 are rbcS-like repeat 1, SSUL1; the sequence is SSEVASNSLG…RVLETIIQRP (93 aa). 2 disordered regions span residues 323-351 and 441-464; these read TSFK…SNGA and NGQV…SGTA. Low complexity-rich tracts occupy residues 330 to 351 and 445 to 464; these read SNTN…SNGA and APSS…SGTA. Residues 347–440 are rbcS-like repeat 2, SSUL2; sequence YSNGATSGKV…RVLESIIQRP (94 aa). The interval 460-555 is rbcS-like repeat 3, SSUL3; it reads SSGTATATAT…RVLETIIQRP (96 aa).

Belongs to the gamma-class carbonic anhydrase family. As to quaternary structure, probable homotrimer; zinc is bound between adjacent monomers. Full length protein (M58) interacts with CcmN. The C-terminal RbcS-like domains (SSUL) bind to holo-RuBisCO, as does the M35 short form. Zn(2+) is required as a cofactor. In terms of processing, the first amino acid of the short form (equivalent to Val-226) is not seen in Edman degradation, while Ser-230 may be post-translationally modified. Migrates in gels as 2 about equal forms of about 60 and 35 kDa (called M58 and M35). They are probably the result of alternative translation initiation.

Its subcellular location is the carboxysome. The protein resides in the cytoplasm. The enzyme catalyses hydrogencarbonate + H(+) = CO2 + H2O. Carbonic anhydrase (CA) activity is probably under redox control to remain inactive in the cytoplasm. Carbonic anhydrase (CA) activity of full-length protein and N-terminal fragment is inhibited by ethoxyzolamide. N-terminal fragment CA activity is activated under oxidizing conditions and inhibited under reducing conditions. Functions as a scaffold protein for the assembly of beta-carboxysomes, initiates carboxysome assembly by coalescing RuBisCO (ribulose bisphosphate carboxylase, rbcL-rbcS). Produced as a full-length (M58) and a short form (M35), possibly by alternative translation initiation; probably both forms are required for correct carboxysome assembly and growth. In this strain both forms are equally abundant. Its function is as follows. A moderately active carbonic anhydrase that catalyzes the reversible hydration of carbon dioxide. Essential to photosynthetic carbon dioxide fixation, supplies CO(2) to ribulose bisphosphate carboxylase (RuBisCO) in the carboxysome. Also hydrolyzes COS. In terms of biological role, beta-carboxysome assembly initiates when soluble RuBisCO is condensed into a liquid matrix in a pre-carboxysome by the RbcS-like domains of probably both forms of CcmM. CcmN interacts with the N-terminus of full length CcmM, and then recruits the shell proteins (CcmK) via CcmN's encapsulation peptide. Shell formation requires both CcmK proteins and CcmO. CcmL caps the otherwise elongated carboxysome. Once fully encapsulated carboxysomes are formed, they migrate within the cell probably via interactions with the cytoskeleton. The chain is Carboxysome assembly protein CcmM from Nostoc sp. (strain PCC 7120 / SAG 25.82 / UTEX 2576).